The sequence spans 196 residues: ATP-dependent Clp protease proteolytic subunit (196 aa).

The active-site Nucleophile is S97. Residue H122 is part of the active site.

This sequence belongs to the peptidase S14 family. In terms of assembly, fourteen ClpP subunits assemble into 2 heptameric rings which stack back to back to give a disk-like structure with a central cavity, resembling the structure of eukaryotic proteasomes.

It localises to the cytoplasm. It catalyses the reaction Hydrolysis of proteins to small peptides in the presence of ATP and magnesium. alpha-casein is the usual test substrate. In the absence of ATP, only oligopeptides shorter than five residues are hydrolyzed (such as succinyl-Leu-Tyr-|-NHMec, and Leu-Tyr-Leu-|-Tyr-Trp, in which cleavage of the -Tyr-|-Leu- and -Tyr-|-Trp bonds also occurs).. Functionally, cleaves peptides in various proteins in a process that requires ATP hydrolysis. Has a chymotrypsin-like activity. Plays a major role in the degradation of misfolded proteins. This Lacticaseibacillus paracasei (strain ATCC 334 / BCRC 17002 / CCUG 31169 / CIP 107868 / KCTC 3260 / NRRL B-441) (Lactobacillus paracasei) protein is ATP-dependent Clp protease proteolytic subunit.